A 494-amino-acid chain; its full sequence is 5'-3' exonuclease PLD3 (494 aa).

Residues 1–37 (MNPKVEYKQIQSHDEAENQVLQHECHQAKARKYYRCA) lie on the Cytoplasmic side of the membrane. A helical; Signal-anchor for type II membrane protein membrane pass occupies residues 38–58 (VVIAIIITLLFCVLASQLLLF). Residues 59 to 494 (PLFSITSQTT…LSSWKEKCIF (436 aa)) lie on the Lumenal side of the membrane. N-linked (GlcNAc...) asparagine glycosylation is present at asparagine 100. The PLD phosphodiesterase 1 domain occupies 198–225 (TDGVLHTKFWVVDSEHFYIGSANMDWRS). Active-site residues include histidine 203, lysine 205, and aspartate 210. 5 N-linked (GlcNAc...) asparagine glycosylation sites follow: asparagine 238, asparagine 260, asparagine 270, asparagine 286, and asparagine 389. In terms of domain architecture, PLD phosphodiesterase 2 spans 413–439 (YARVNHNKYMVTDRVAYIGTSNWSGDY). Catalysis depends on residues histidine 418, lysine 420, and aspartate 425. N-linked (GlcNAc...) asparagine glycans are attached at residues asparagine 434, asparagine 451, and asparagine 477.

It belongs to the phospholipase D family. In terms of processing, N-glycosylated. Post-translationally, proteolytically processed to a soluble form that is stable within endosomes and lysosomes. During transport through the secretory pathway becomes proteolysed by cysteine proteases, thereby releasing a stable soluble lysosomal lumenal polypeptide, whereas the transmembrane-bound fragment is rapidly degraded. Its transport route to lysosomes involves ubiquitination and the ESCRT complex. Ubiquitinated. Ubiquitination mediates sorting into lysosomes.

The protein localises to the endoplasmic reticulum membrane. It localises to the lysosome lumen. Its subcellular location is the early endosome membrane. The protein resides in the late endosome membrane. It is found in the golgi apparatus membrane. The protein localises to the endosome membrane. It catalyses the reaction Exonucleolytic cleavage in the 5'- to 3'-direction to yield nucleoside 3'-phosphates.. Functionally, 5'-&gt;3' DNA exonuclease which digests single-stranded DNA (ssDNA). Regulates inflammatory cytokine responses via the degradation of nucleic acids, by reducing the concentration of ssDNA able to stimulate TLR9, a nucleotide-sensing receptor in collaboration with PLD4. May be important in myotube formation. Plays a role in lysosomal homeostasis. Involved in the regulation of endosomal protein sorting. The polypeptide is 5'-3' exonuclease PLD3 (pld3) (Xenopus tropicalis (Western clawed frog)).